The primary structure comprises 318 residues: NAD kinase (318 aa).

Residue aspartate 84 is the Proton acceptor of the active site. NAD(+) is bound by residues 84 to 85, arginine 89, 159 to 160, arginine 170, aspartate 189, and 200 to 205; these read DG, NE, and TAYAFS.

The protein belongs to the NAD kinase family. It depends on a divalent metal cation as a cofactor.

Its subcellular location is the cytoplasm. The catalysed reaction is NAD(+) + ATP = ADP + NADP(+) + H(+). In terms of biological role, involved in the regulation of the intracellular balance of NAD and NADP, and is a key enzyme in the biosynthesis of NADP. Catalyzes specifically the phosphorylation on 2'-hydroxyl of the adenosine moiety of NAD to yield NADP. The protein is NAD kinase of Cutibacterium acnes (strain DSM 16379 / KPA171202) (Propionibacterium acnes).